A 148-amino-acid polypeptide reads, in one-letter code: UPF0178 protein LPC_0108 (148 aa).

The protein belongs to the UPF0178 family.

This is UPF0178 protein LPC_0108 from Legionella pneumophila (strain Corby).